The sequence spans 229 residues: Translation initiation factor 6 (229 aa).

It belongs to the eIF-6 family.

In terms of biological role, binds to the 50S ribosomal subunit and prevents its association with the 30S ribosomal subunit to form the 70S initiation complex. The sequence is that of Translation initiation factor 6 from Thermococcus kodakarensis (strain ATCC BAA-918 / JCM 12380 / KOD1) (Pyrococcus kodakaraensis (strain KOD1)).